A 134-amino-acid polypeptide reads, in one-letter code: TSC22 domain family protein 3 (134 aa).

The segment at 1–60 is AP1-binding; sequence MNTEMYQTPMEVAVYQLHNFSISFFSSLLGGDVVSVKLDNSASGASVVALDNKIEQAMDL. The tract at residues 76–97 is leucine-zipper; the sequence is LKEQIRELVEKNSQLERENTLL. Residues 101–134 are disordered; sequence ASPEQLEKFQSRLSPEEPAPEAPETPEAPGGSAV. A Phosphoserine modification is found at serine 102. A Phosphothreonine modification is found at threonine 125. Residues 125–134 are compositionally biased toward low complexity; the sequence is TPEAPGGSAV.

This sequence belongs to the TSC-22/Dip/Bun family. In terms of assembly, can form homodimers, however it is likely to function as a monomer. Interacts with NFKB1. Interacts (via N-terminus) with JUN and FOS; these interactions inhibit the binding of active AP1 to its target DNA. Interacts with MYOD1. Interacts with HDAC1; this interaction affects HDAC1 activity on MYOG promoter and thus inhibits MYOD1 transcriptional activity.

The protein resides in the cytoplasm. The protein localises to the nucleus. In terms of biological role, protects T-cells from IL2 deprivation-induced apoptosis through the inhibition of FOXO3A transcriptional activity that leads to the down-regulation of the pro-apoptotic factor BCL2L11. In macrophages, plays a role in the anti-inflammatory and immunosuppressive effects of glucocorticoids and IL10. In T-cells, inhibits anti-CD3-induced NFKB1 nuclear translocation and thereby NFKB1 DNA-binding activities. In vitro, suppresses AP-1 transcription factor complex DNA-binding activities. In Rattus norvegicus (Rat), this protein is TSC22 domain family protein 3 (Tsc22d3).